A 118-amino-acid polypeptide reads, in one-letter code: Small ribosomal subunit protein uS13 (118 aa).

Residues 94–118 (SLPLRGQRTKTNARTRKGPRKPIRK) are disordered.

This sequence belongs to the universal ribosomal protein uS13 family. In terms of assembly, part of the 30S ribosomal subunit. Forms a loose heterodimer with protein S19. Forms two bridges to the 50S subunit in the 70S ribosome.

In terms of biological role, located at the top of the head of the 30S subunit, it contacts several helices of the 16S rRNA. In the 70S ribosome it contacts the 23S rRNA (bridge B1a) and protein L5 of the 50S subunit (bridge B1b), connecting the 2 subunits; these bridges are implicated in subunit movement. Contacts the tRNAs in the A and P-sites. The protein is Small ribosomal subunit protein uS13 of Shewanella frigidimarina (strain NCIMB 400).